The chain runs to 292 residues: Beta-lactamase-like protein 2 homolog (292 aa).

7 residues coordinate Zn(2+): H76, H78, D80, H81, H145, D163, and H198.

This sequence belongs to the metallo-beta-lactamase superfamily. Glyoxalase II family.

This Drosophila melanogaster (Fruit fly) protein is Beta-lactamase-like protein 2 homolog.